Consider the following 386-residue polypeptide: Putative matrix metalloproteinase (386 aa).

The first 34 residues, 1 to 34, serve as a signal peptide directing secretion; the sequence is MPTAHFQHSIRYLNVTNMLIFSIISFLLIYQTNS. N-linked (GlcNAc...) asparagine; by host glycans are attached at residues asparagine 14 and asparagine 58. Residue histidine 186 participates in Zn(2+) binding. Residue glutamate 187 is part of the active site. Positions 190 and 196 each coordinate Zn(2+). Residues 235-258 are disordered; the sequence is NEQSTHQSTRHRPHRRPSPDGSCR.

The protein belongs to the peptidase M10A family. Zn(2+) is required as a cofactor.

This is Putative matrix metalloproteinase from Spodoptera frugiperda (Fall armyworm).